Consider the following 540-residue polypeptide: MTLNSLPAWTALQSHFEQIRHARLRDWFAPQNDPAPTRAERFTFSGGGLAADFSKNRITDETLRLLVQLAREARVEARRDAMFAGEIVNPTEGRAALHTALRATDPHAPFHAQVSAERAKMATFARAVRNGTWTGHTGKRIRHVINIGIGGSDLGPKMVTHALRHVATRDISMHFVSNVDGADLARVLEQVDPEETLAIVVSKTFTTLETMTNARSLRDWFVAKGCPEDALAKHFVGVSANPAEVVKFGIAADNVFEMWDWVGGRYSLWSAVGLSIMIAIGPEQFDELLAGANDMDRHFREAPLERNLPVLLGLIGIWYRNFFGSQSYLVAPYSEALHYLPSYLQQLEMESNGKSARLDGRFVDYPTAAVTWGEPGTNGQHAFFQMLHQGPTIVPIDFIAVLTPEHPLASHHPKLLANCFAQSEALMLGRTLEEARKVAGPGKEDLAPHLTFPGNRPTTTLLVDALTPRSLGALIALYEHKVLVQATVWDINPFDQWGVELGKILGKVVEADLAADALDTAKHDSSTTALIARARAALKR.

Catalysis depends on Glu-350, which acts as the Proton donor. Catalysis depends on residues His-381 and Lys-503.

Belongs to the GPI family.

The protein localises to the cytoplasm. The enzyme catalyses alpha-D-glucose 6-phosphate = beta-D-fructose 6-phosphate. It functions in the pathway carbohydrate biosynthesis; gluconeogenesis. The protein operates within carbohydrate degradation; glycolysis; D-glyceraldehyde 3-phosphate and glycerone phosphate from D-glucose: step 2/4. Its function is as follows. Catalyzes the reversible isomerization of glucose-6-phosphate to fructose-6-phosphate. This Burkholderia multivorans (strain ATCC 17616 / 249) protein is Glucose-6-phosphate isomerase.